A 261-amino-acid chain; its full sequence is MADINDPVLAKPADLCCLKGDFHRGEPTGSIIQIEGVDTYVAKPDPKFTNGNVLLFFPDAFGLHINSKLMMDAYAACGYLTLGVDYFLGDAVTKYSASPLNDPNFDLAAWSAKHLLPSEEIAREWVKNIKAKYGNDGKVKFGCIGYCWGARIVLQQLSDGGICSAGAIAHPSFVNESHVQKSKAPVAFSVPATDKLFSNEARTRVIEICTEKQQRFNMQVFSHVGHGFASRTRLTDPYELWAKEQHFKGFIEWLDFWLARE.

Active-site residues include Cys-147, Asp-194, and His-226.

The protein belongs to the dienelactone hydrolase family.

The protein operates within xenobiotic degradation. Functionally, dienlactone hydrolase; part of the Fusarium detoxification of benzoxazolinone cluster 1 (FDB1) involved in the degradation of benzoxazolinones produced by the host plant. Maize, wheat, and rye produce the 2 benzoxazinone phytoanticipins 2,4-dihy-droxy-7-methoxy-1,4-benzoxazin-3-one (DIMBOA) and 2,4-dihydroxy-1,4-benzoxazin-3-one (DIBOA) that, due to their inherent instability once released, spontaneously degrade to the more stable corresponding benzoxazolinones, 6-methoxy-2-benzoxazolinone (MBOA) and 2-benzoxazolinone (BOA), respectively. The first step in the detoxification of benzoxazolinones involves the hydrolysis of the cyclic ester bond of benzoxazolinones by the FDB1 cluster gamma-lactamase MBL1 to aminophenols. MBL1 is able to convert BOA into 2-aminophenol (2-AP), as well as MBOA into 5-methoxy-2-aminophenol (2-AMP). The FDB2 cluster N-malonyltransferase FDB2/NAT1 then metabolizes aminophenols via N-malonylation to non-toxic malonamic acids. FDB2/NAT1 converts 2-AP into N-(2-hydroxyphenyl) malonamic acid (HPMA) and 2-AMP into N-(2-hydroxy-4-methoxyphenyl) malonamic acid (HMPMA). The duplicated dienlactone hydrolases DLH1 and DLH2 may provide redundant function for hydrolyzing the lactone moiety in the BOA molecule. The roles of the amidases and other enzymes encoded by the 2 FDB clusters have not been identified so far. The polypeptide is Dienlactone hydrolase 1 (Gibberella moniliformis (strain M3125 / FGSC 7600) (Maize ear and stalk rot fungus)).